A 276-amino-acid chain; its full sequence is Rhomboid protease GlpG (276 aa).

A run of 6 helical transmembrane segments spans residues 94–114 (AGPL…LMQI), 142–162 (ALLH…WYLG), 168–188 (VLGT…SGWA), 193–213 (SGTY…YVWL), 229–249 (LMAF…GMSI), and 250–270 (ANAA…WDTY). Ser201 serves as the catalytic Nucleophile. Residue His254 is part of the active site.

The protein belongs to the peptidase S54 family.

Its subcellular location is the cell inner membrane. It catalyses the reaction Cleaves type-1 transmembrane domains using a catalytic dyad composed of serine and histidine that are contributed by different transmembrane domains.. In terms of biological role, rhomboid-type serine protease that catalyzes intramembrane proteolysis. The chain is Rhomboid protease GlpG from Pectobacterium atrosepticum (strain SCRI 1043 / ATCC BAA-672) (Erwinia carotovora subsp. atroseptica).